A 927-amino-acid polypeptide reads, in one-letter code: MSIQKLNDTTNSGYVSSEETDSLLVSSSNPSKGGGRTALLRQVKSNSTNGPTTGASTSSSGSVSGGGGGSGSGGGSASGSAAGASKPTLMRQDRTSTYLTSPQQSQHARMGSEESMRGGASGAAGHDEDVEQGLVRSSIVPDIEVHEEDQEQHSQQLNATTMATMTNNQQQQQPTISIMNLSLKPGDSHSHSSSPGSHPNLGTSSYQNLASSIPPSVPSRCRACRNCSRRASTTPTTLIDRSASRDSVKSAFQQGNLSGSMAICISNSALPQQQQLQQQYHLQQQQQQHYQLQQHHLHQQQLQQSQQQVPPVLITSSPTNGSRIIRQSSQPESSSTAICCGPHSACVGHAHSHSHTVPNVSLKQLRESSGDGIAGIAADSLRINGGMRPFKQLRKPASTLSIPGSMKTPSIANREQISSGCNEEAAEALVGIHSDYPRYEMYMEERALTGGNTSRKPSTNSAKHKPNVGYRLGKRKALFEKRKRISDYALVMGMFGIIVMVIENELSSAGVYTKASFYSTALKTLISVSTVILLGLIVAYHALEVQLFMIDNCADDWRIAMTWQRISQIGLELFICAIHPIPGEYYFQWTTKLANKNKTIGTEMVPYDVALSLPMFLRLYLICRVMLLHSKLFTDASSRSIGALNRINFNTRFVLKTLMTICPGTVLLVFMVSLWIIASWTLRQCERFHDEEHANLLNSMWLTAITFLCVGYGDIVPNTYCGRGITLTCGMVGAGCTALLVAVVSRKLELTRAEKHVHNFMMDTQLTKRLKNAAANVLRETWLIYKHTRLVKRVNPGRVRTHQRKFLLAIYALRKVKMDQRKLMDNANTITDMAKTQNTVYEIISDMSSRQDAIEERLTNLEDKMQSIQEHMESLPDLLSRCLTQHQERIEQRRNFLHPDTAAVAPIQAPTPQSMFNAAPMLFPHSS.

Residues 1–31 (MSIQKLNDTTNSGYVSSEETDSLLVSSSNPS) are compositionally biased toward polar residues. Disordered stretches follow at residues 1-131 (MSIQ…EDVE), 181-251 (LSLK…VKSA), and 296-336 (HLHQ…SSST). A compositionally biased stretch (low complexity) spans 45–62 (SNSTNGPTTGASTSSSGS). Gly residues predominate over residues 63 to 77 (VSGGGGGSGSGGGSA). Composition is skewed to polar residues over residues 95–107 (TSTY…QSQH) and 200–214 (NLGT…SSIP). 2 stretches are compositionally biased toward low complexity: residues 219–232 (SRCR…RRAS) and 296–308 (HLHQ…SQQQ). Positions 314-336 (ITSSPTNGSRIIRQSSQPESSST) are enriched in polar residues. A helical transmembrane segment spans residues 489-509 (ALVMGMFGIIVMVIENELSSA). Residues 530–550 (TVILLGLIVAYHALEVQLFMI) form a helical membrane-spanning segment. Residues 569 to 589 (IGLELFICAIHPIPGEYYFQW) form a helical membrane-spanning segment. A helical membrane pass occupies residues 609–629 (VALSLPMFLRLYLICRVMLLH). Residues 658-678 (LMTICPGTVLLVFMVSLWIIA) form a helical membrane-spanning segment. An intramembrane region (pore-forming) is located at residues 696–716 (LLNSMWLTAITFLCVGYGDIV). The chain crosses the membrane as a helical span at residues 724–744 (GITLTCGMVGAGCTALLVAVV). Residues 763 to 839 (DTQLTKRLKN…ITDMAKTQNT (77 aa)) are calmodulin-binding.

This sequence belongs to the potassium channel KCNN family. SK subfamily. Heterooligomer. The complex is composed of 4 channel subunits each of which binds to a calmodulin subunit which regulates the channel activity through calcium-binding.

Its subcellular location is the membrane. Forms a voltage-independent potassium channel activated by intracellular calcium. Activation is followed by membrane hyperpolarization. Thought to regulate neuronal excitability by contributing to the slow component of synaptic afterhyperpolarization. The channel is blocked by apamin. The protein is Small conductance calcium-activated potassium channel protein of Drosophila melanogaster (Fruit fly).